The chain runs to 204 residues: Putative uracil phosphoribosyltransferase urg2 (204 aa).

Residues Arg-75, Arg-100, and 126-134 (DPVMATGGT) each bind 5-phospho-alpha-D-ribose 1-diphosphate. Tyr-187 is a binding site for D-ribose 5-phosphate. Residues Leu-188 and 193 to 195 (GDI) each bind uracil. Asp-194 lines the 5-phospho-alpha-D-ribose 1-diphosphate pocket.

It belongs to the UPRTase family. Requires Mg(2+) as cofactor.

The protein localises to the cytoplasm. Its subcellular location is the nucleus. It carries out the reaction UMP + diphosphate = 5-phospho-alpha-D-ribose 1-diphosphate + uracil. It functions in the pathway pyrimidine metabolism; UMP biosynthesis via salvage pathway; UMP from uracil: step 1/1. Its activity is regulated as follows. Allosterically activated by GTP. Functionally, catalyzes the conversion of uracil and 5-phospho-alpha-D-ribose 1-diphosphate (PRPP) to UMP and diphosphate. The polypeptide is Putative uracil phosphoribosyltransferase urg2 (Schizosaccharomyces pombe (strain 972 / ATCC 24843) (Fission yeast)).